We begin with the raw amino-acid sequence, 581 residues long: Activating signal cointegrator 1 (581 aa).

Residue A2 is modified to N-acetylalanine. Positions 97–118 (KSGDHLKRGRKKGRNRQEVPAF) are disordered. The C4-type zinc-finger motif lies at 171–187 (CDCLGQKHKLINNCLIC). The segment at 200–300 (CLFCGTLVCT…ASDSNQWLSK (101 aa)) is mediates interaction with DDRGK1. Phosphoserine is present on S276. Y289 bears the Phosphotyrosine mark. Residues 300-400 (KLERETLQKR…WVDHTGAASQ (101 aa)) are mediates interaction with UFL1. Residues K324, K325, and K334 each participate in a glycyl lysine isopeptide (Lys-Gly) (interchain with G-Cter in UFM1) cross-link. S341 bears the Phosphoserine mark. K367 is covalently cross-linked (Glycyl lysine isopeptide (Lys-Gly) (interchain with G-Cter in UFM1)). In terms of domain architecture, ASCH spans 437 to 531 (LSVHQPWASL…FKEQFPDISQ (95 aa)).

In terms of assembly, interacts with the thyroid hormone receptor/TR (via the ligand-binding domain); this interaction requires the presence of thyroid hormone. Interacts with the androgen receptor/AR; in an androgen, testosterone and dihydrotestosterone-dependent manner. Interacts with ESR1 (estrogen ligand-bound); competes with UFSP2. Interacts with UFSP2; competes with ligand-bound ESR1. Interacts with DDRGK1 and UFL1; the interaction with DDRGK1 is direct. Interacts with NCOA1. Interacts with EP300. Part of the ASC-1 complex, that contains TRIP4, ASCC1, ASCC2 and ASCC3. Identified in the RQT (ribosome quality control trigger) complex, that contains ASCC2, ASCC3 and TRIP4. Interacts with NEK6. Interacts with CSRP1. Interacts with ZCCHC4. In terms of processing, phosphorylated by NEK6. Polyufmylated by the UFM1-conjugating system composed of the enzymes UBA5, UFC1 and UFL1. Deufmylated by the protease UFSP2. Ufmylation of TRIP4 is promoted by ligand-bound nuclear receptors that compete with UFSP2 for interaction with TRIP4. Nuclear receptors-induced ufmylation promotes the recruitment of additional transcriptional coactivators like EP300 and NCOA1 and therefore the assembly of a coactivator complex facilitating nuclear receptor-mediated transcription.

It is found in the nucleus. It localises to the cytoplasm. Its subcellular location is the cytosol. The protein resides in the cytoskeleton. The protein localises to the microtubule organizing center. It is found in the centrosome. Its function is as follows. Transcription coactivator which associates with nuclear receptors, transcriptional coactivators including EP300, CREBBP and NCOA1, and basal transcription factors like TBP and TFIIA to facilitate nuclear receptors-mediated transcription. May thereby play an important role in establishing distinct coactivator complexes under different cellular conditions. Plays a role in thyroid hormone receptor and estrogen receptor transactivation. Also involved in androgen receptor transactivation. Plays a pivotal role in the transactivation of NF-kappa-B, SRF and AP1. Acts as a mediator of transrepression between nuclear receptor and either AP1 or NF-kappa-B. May play a role in the development of neuromuscular junction. May play a role in late myogenic differentiation. Also functions as part of the RQC trigger (RQT) complex that activates the ribosome quality control (RQC) pathway, a pathway that degrades nascent peptide chains during problematic translation. This chain is Activating signal cointegrator 1, found in Homo sapiens (Human).